Reading from the N-terminus, the 758-residue chain is Spastin (758 aa).

Residues Met1–His99 are disordered. Over Met1–Pro121 the chain is Cytoplasmic. A required for localization to punctate cytoplasmic foci region spans residues Met1 to Ala210. 4 stretches are compositionally biased toward low complexity: residues Ser8–Gly29, Arg43–Ser58, Ser66–Pro76, and Thr85–Pro95. Residues Ile122–Tyr142 constitute an intramembrane region (helical). At Leu143 to Ile758 the chain is on the cytoplasmic side. Composition is skewed to polar residues over residues Ser169–Ser180 and Gln189–Gln198. A disordered region spans residues Ser169–Pro221. Residues Met208–Ile758 form a sufficient for interaction with microtubules and microtubule severing region. The 76-residue stretch at His233–Leu308 folds into the MIT domain. Disordered stretches follow at residues Arg353 to Leu376 and Asn390 to Pro454. Polar residues-rich tracts occupy residues Asn390 to Gly406 and Gln425 to Pro454. Residues Asn443 to Val455 form a required for interaction with microtubules region. An ATP-binding site is contributed by Gly523 to Thr530.

It belongs to the AAA ATPase family. Spastin subfamily. As to quaternary structure, homohexamer. The homohexamer is stabilized by ATP-binding. The homohexamer may adopt a ring conformation through which microtubules pass prior to being severed. Interacts with microtubules. Interacts with atl; may be involved in microtubule dynamics.

The protein resides in the membrane. It localises to the cytoplasm. It is found in the cytoskeleton. Its subcellular location is the microtubule organizing center. The protein localises to the centrosome. The protein resides in the chromosome. It localises to the lipid droplet. The enzyme catalyses n ATP + n H2O + a microtubule = n ADP + n phosphate + (n+1) alpha/beta tubulin heterodimers.. Functionally, ATP-dependent microtubule severing protein. Stimulates microtubule minus-end depolymerization and poleward microtubule flux in the mitotic spindle. Regulates microtubule stability in the neuromuscular junction synapse. Involved in lipid metabolism by regulating the size and distribution of lipid droplets. Involved in axon regeneration by regulating microtubule severing. The protein is Spastin of Drosophila yakuba (Fruit fly).